The primary structure comprises 714 residues: Protein spire homolog 2 (714 aa).

In terms of domain architecture, KIND spans 22–203 (LSLEEVLKAY…RALFVETLEL (182 aa)). Positions 136–162 (DSEDSGCGAADEGYGGPEEEEEAEGVP) are disordered. WH2 domains lie at 248-262 (QLMRELRRGVKLKKV), 278-296 (PFEMLMQDIRARNYKLRKV), and 342-359 (LHEKILEEIKQERRLRPV). Residues S371, S440, S442, and S476 each carry the phosphoserine modification. Residues 453–516 (VASGLQSATH…SSGDRPEASM (64 aa)) are disordered. The segment covering 486–496 (DQGTCPASVSD) has biased composition (polar residues). A spir-box region spans residues 534–554 (LALTVEEVMDVRRVLVKAEME).

Belongs to the spire family.

The protein localises to the cytoplasm. It is found in the cytoskeleton. The protein resides in the cytosol. It localises to the cell membrane. Its subcellular location is the cytoplasmic vesicle membrane. Its function is as follows. Acts as an actin nucleation factor, remains associated with the slow-growing pointed end of the new filament. Involved in intracellular vesicle transport along actin fibers, providing a novel link between actin cytoskeleton dynamics and intracellular transport. Required for asymmetric spindle positioning and asymmetric cell division during meiosis. Required for normal formation of the cleavage furrow and for polar body extrusion during female germ cell meiosis. Also acts in the nucleus: together with SPIRE1 and SPIRE2, promotes assembly of nuclear actin filaments in response to DNA damage in order to facilitate movement of chromatin and repair factors after DNA damage. In Homo sapiens (Human), this protein is Protein spire homolog 2 (SPIRE2).